Reading from the N-terminus, the 61-residue chain is Cobrotoxin-c (61 aa).

4 disulfide bridges follow: cysteine 3/cysteine 23, cysteine 17/cysteine 40, cysteine 42/cysteine 53, and cysteine 54/cysteine 59.

It belongs to the three-finger toxin family. Short-chain subfamily. Type I alpha-neurotoxin sub-subfamily. In terms of tissue distribution, expressed by the venom gland.

It is found in the secreted. Produces peripheral paralysis by blocking neuromuscular transmission at the postsynaptic site. Binds to the nicotinic acetylcholine receptor. The sequence is that of Cobrotoxin-c from Naja kaouthia (Monocled cobra).